A 204-amino-acid chain; its full sequence is GATA transcription factor 14 (204 aa).

The segment covering Arg57–Pro66 has biased composition (basic and acidic residues). The disordered stretch occupies residues Arg57–Pro102. A compositionally biased stretch (basic residues) spans Gly79–Ser98. Residues Gly111–Pro165 form a GATA-type zinc finger. The interval Arg180–Phe204 is disordered. Polar residues predominate over residues Ser185–Tyr196.

The protein belongs to the type IV zinc-finger family. Class A subfamily.

The protein resides in the nucleus. In terms of biological role, transcriptional activator that specifically binds 5'-GATA-3' or 5'-GAT-3' motifs within gene promoters. May be involved in the regulation of some light-responsive genes. This chain is GATA transcription factor 14 (GATA14), found in Arabidopsis thaliana (Mouse-ear cress).